The primary structure comprises 109 residues: A-type ATP synthase subunit F (109 aa).

Belongs to the V-ATPase F subunit family. As to quaternary structure, has multiple subunits with at least A(3), B(3), C, D, E, F, H, I and proteolipid K(x).

The protein localises to the cell membrane. Its function is as follows. Component of the A-type ATP synthase that produces ATP from ADP in the presence of a proton gradient across the membrane. The sequence is that of A-type ATP synthase subunit F from Haloquadratum walsbyi (strain DSM 16790 / HBSQ001).